We begin with the raw amino-acid sequence, 111 residues long: MKGGMAGLMKQAQQMQEKMAKMQEELANAEVTGKAGGDMVTVVMTGRHDIKRVSIDPSLLEGVSEDDREVLEDLFAAAVNDAVRKIESNSQEKMSGMTAGMQLPPGMKLPF.

2 disordered regions span residues 1 to 20 and 88 to 111; these read MKGGMAGLMKQAQQMQEKMA and SNSQEKMSGMTAGMQLPPGMKLPF.

Belongs to the YbaB/EbfC family. Homodimer.

It localises to the cytoplasm. The protein resides in the nucleoid. Functionally, binds to DNA and alters its conformation. May be involved in regulation of gene expression, nucleoid organization and DNA protection. This Pseudomonas fluorescens (strain ATCC BAA-477 / NRRL B-23932 / Pf-5) protein is Nucleoid-associated protein PFL_1905.